The sequence spans 352 residues: tRNA pseudouridine synthase D (352 aa).

Catalysis depends on Asp-81, which acts as the Nucleophile. Residues 157–303 (GVPNYFGLQR…MLHERRILRL (147 aa)) form the TRUD domain.

The protein belongs to the pseudouridine synthase TruD family.

It catalyses the reaction uridine(13) in tRNA = pseudouridine(13) in tRNA. Its function is as follows. Responsible for synthesis of pseudouridine from uracil-13 in transfer RNAs. This is tRNA pseudouridine synthase D from Azotobacter vinelandii (strain DJ / ATCC BAA-1303).